The following is a 467-amino-acid chain: Cysteine--tRNA ligase (467 aa).

Cys-28 contacts Zn(2+). Positions 30-40 (MTVYDHCHLGH) match the 'HIGH' region motif. The Zn(2+) site is built by Cys-209, His-234, and Glu-238. The short motif at 266-270 (KMSKS) is the 'KMSKS' region element. Lys-269 is an ATP binding site.

Belongs to the class-I aminoacyl-tRNA synthetase family. Monomer. Zn(2+) is required as a cofactor.

It is found in the cytoplasm. It catalyses the reaction tRNA(Cys) + L-cysteine + ATP = L-cysteinyl-tRNA(Cys) + AMP + diphosphate. In Nitrosomonas eutropha (strain DSM 101675 / C91 / Nm57), this protein is Cysteine--tRNA ligase.